The following is a 163-amino-acid chain: SKP1-like protein 3 (163 aa).

The segment at 105–163 (LRAANYLNISGLLDLTCKAVADQMRGKTPAQMREHFNIKNDYTPEEEAEVRNENRWAFE) is interaction with the F-box domain of F-box proteins.

It belongs to the SKP1 family. In terms of assembly, part of a SCF (SKP1-cullin-F-box) protein ligase complex. Interacts with ADO3/FKF1 and At3g61590. As to expression, highly expressed in siliques.

Its subcellular location is the nucleus. The protein operates within protein modification; protein ubiquitination. Functionally, involved in ubiquitination and subsequent proteasomal degradation of target proteins. Together with CUL1, RBX1 and a F-box protein, it forms a SCF E3 ubiquitin ligase complex. The functional specificity of this complex depends on the type of F-box protein. In the SCF complex, it serves as an adapter that links the F-box protein to CUL1. In Arabidopsis thaliana (Mouse-ear cress), this protein is SKP1-like protein 3 (ASK3).